A 516-amino-acid chain; its full sequence is MGDPSKQDILTIFKRLRSVPTNKVCFDCGAKNPSWASITYGVFLCIDCSGSHRSLGVHLSFIRSTELDSNWSWFQLRCMQVGGNANASSFFHQHGCSTNDTNAKYNSRAAQLYREKIKSLASQATRKHGTDLWLDSCVVPPLSPPPKEEDFFASHVSPEVSDTAWASAIAEPSSLTSRPAETTLENNEGGQEQGPCVEGLNVPTKATLEVSSIIKKKPNQAKKGLGAKKRSLGAQKLANTCFNEIEKQAQAADKMKEQEDLAKAAPKEESIVSSLRLAYKDLEIQMKKDEKMNISGKKNVDSDRLGMGFGNCRSGISHSVTSDMQTIEQESPIMAKPRKKYNDDGDDSYFTSSSRYFDEPVELRSGSFSSWDDSSDSYWKKETSKDTETVLKTTGYSDRPTARHKPDYEPVENTDEAQKKFGNVKAISSDMYFGRQAQADYETRARLERLSASSSISSADLFEEQRKQAAGNYSLSSVLPNAPDMAQFKQGVRSVAGKLSVFANGVVTSIQDRYGS.

The Arf-GAP domain occupies 10-126; it reads LTIFKRLRSV…IKSLASQATR (117 aa). The segment at 25–48 adopts a C4-type zinc-finger fold; that stretch reads CFDCGAKNPSWASITYGVFLCIDC. Residues 170 to 199 form a disordered region; that stretch reads AEPSSLTSRPAETTLENNEGGQEQGPCVEG. Residues 173–190 show a composition bias toward polar residues; the sequence is SSLTSRPAETTLENNEGG. Serine 231 carries the phosphoserine modification. Residues 243–264 adopt a coiled-coil conformation; it reads NEIEKQAQAADKMKEQEDLAKA. Phosphoserine is present on residues serine 270, serine 274, serine 331, and serine 370. The interval 393–417 is disordered; sequence TTGYSDRPTARHKPDYEPVENTDEA. Residues serine 428, serine 451, serine 453, serine 455, serine 457, and serine 458 each carry the phosphoserine modification.

It localises to the cytoplasm. The protein resides in the golgi apparatus membrane. With respect to regulation, GAP activity stimulated by phosphatidylinositol 4,5-bisphosphate (PIP2). Its function is as follows. GTPase-activating protein (GAP) for ADP ribosylation factor 1 (ARF1). Hydrolysis of ARF1-bound GTP may lead to dissociation of coatomer from Golgi-derived membranes to allow fusion with target membranes. This Pongo abelii (Sumatran orangutan) protein is ADP-ribosylation factor GTPase-activating protein 3.